Consider the following 304-residue polypeptide: Non-specific ribonucleoside hydrolase RihC (304 aa).

H233 is an active-site residue.

Belongs to the IUNH family. RihC subfamily.

Hydrolyzes both purine and pyrimidine ribonucleosides with a broad-substrate specificity. This chain is Non-specific ribonucleoside hydrolase RihC, found in Escherichia coli O127:H6 (strain E2348/69 / EPEC).